Reading from the N-terminus, the 1006-residue chain is UPF0182 protein Arth_2749 (1006 aa).

A run of 7 helical transmembrane segments spans residues 18–38 (GALTPTLIVVALVVVGFIFFA), 64–84 (IIIFLAGFALMFVAMFYAIRI), 115–135 (VVMIGLPVLFGLFAGSAAASQ), 168–188 (FLGFVTGFLISVVVVAGIAGI), 211–231 (QIHLAVTGAVFLLLLGVNFWL), 260–280 (SILAVAAALVAILFIVAAVIG), and 287–307 (IGTAMLVITSILAGGVYPWVI). Disordered stretches follow at residues 490 to 519 (GAPEGSPHREQDRPAGKEGDGETQYTFTGN), 896 to 923 (KAGDFANNGQTPPPAAGGSTPPATGGTD), and 975 to 1006 (LGSEGASPTPGATTAPTATPSAAATPSPSPSN). Positions 495 to 509 (SPHREQDRPAGKEGD) are enriched in basic and acidic residues. Composition is skewed to low complexity over residues 911-923 (AGGSTPPATGGTD) and 979-1000 (GASPTPGATTAPTATPSAAATP).

The protein belongs to the UPF0182 family.

The protein localises to the cell membrane. The protein is UPF0182 protein Arth_2749 of Arthrobacter sp. (strain FB24).